We begin with the raw amino-acid sequence, 159 residues long: Ribosomal RNA large subunit methyltransferase H (159 aa).

S-adenosyl-L-methionine-binding positions include L76, G108, and 127–132; that span reads FSKMTF.

It belongs to the RNA methyltransferase RlmH family. In terms of assembly, homodimer.

It localises to the cytoplasm. The catalysed reaction is pseudouridine(1915) in 23S rRNA + S-adenosyl-L-methionine = N(3)-methylpseudouridine(1915) in 23S rRNA + S-adenosyl-L-homocysteine + H(+). In terms of biological role, specifically methylates the pseudouridine at position 1915 (m3Psi1915) in 23S rRNA. In Clostridium novyi (strain NT), this protein is Ribosomal RNA large subunit methyltransferase H.